We begin with the raw amino-acid sequence, 171 residues long: T-cell surface glycoprotein CD3 delta chain (171 aa).

A signal peptide spans 1–21; the sequence is MEHSRFLSGLILAAFLSRVSP. Residues 22–104 lie on the Extracellular side of the membrane; the sequence is YEVEMEELED…NCVELDSATL (83 aa). Residues Cys37 and Cys72 are joined by a disulfide bond. N-linked (GlcNAc...) asparagine glycosylation is present at Asn38. The chain crosses the membrane as a helical span at residues 105–125; that stretch reads AGIIVTDIIATLLLALGVYCF. Residues 126 to 171 lie on the Cytoplasmic side of the membrane; sequence AGHEMGRFSRAADTQDLLRNDQLYQPLRDRNDGQYSRLGENWARNK. Residues 138–166 enclose the ITAM domain; the sequence is DTQDLLRNDQLYQPLRDRNDGQYSRLGEN. Tyr149 and Tyr160 each carry phosphotyrosine.

As to quaternary structure, the TCR-CD3 complex is composed of a CD3D/CD3E and a CD3G/CD3E heterodimers that preferentially associate with TCRalpha and TCRbeta, respectively, to form TCRalpha/CD3E/CD3G and TCRbeta/CD3G/CD3E trimers. In turn, the hexamer interacts with CD3Z homodimer to form the TCR-CD3 complex. Alternatively, TCRalpha and TCRbeta can be replaced by TCRgamma and TCRdelta. Interacts with coreceptors CD4 and CD8. Phosphorylated on Tyr residues after T-cell receptor triggering by LCK in association with CD4/CD8. CD3D is mostly present on T-lymphocytes with its TCR-CD3 partners. Present also in fetal NK-cells.

It localises to the cell membrane. Functionally, part of the TCR-CD3 complex present on T-lymphocyte cell surface that plays an essential role in adaptive immune response. When antigen presenting cells (APCs) activate T-cell receptor (TCR), TCR-mediated signals are transmitted across the cell membrane by the CD3 chains CD3D, CD3E, CD3G and CD3Z. All CD3 chains contain immunoreceptor tyrosine-based activation motifs (ITAMs) in their cytoplasmic domain. Upon TCR engagement, these motifs become phosphorylated by Src family protein tyrosine kinases LCK and FYN, resulting in the activation of downstream signaling pathways. In addition of this role of signal transduction in T-cell activation, CD3D plays an essential role in thymocyte differentiation. Indeed, participates in correct intracellular TCR-CD3 complex assembly and surface expression. In absence of a functional TCR-CD3 complex, thymocytes are unable to differentiate properly. Interacts with CD4 and CD8 and thus serves to establish a functional link between the TCR and coreceptors CD4 and CD8, which is needed for activation and positive selection of CD4 or CD8 T-cells. This chain is T-cell surface glycoprotein CD3 delta chain (CD3D), found in Sus scrofa (Pig).